We begin with the raw amino-acid sequence, 2116 residues long: MEKLLDEVLAPGGPYNLTVGSWVRDHVRSIVEGAWEVRDVVTAAQKRAIVAVIPRPVFTQMQVSDHPALHAISRYTRRHWIEWGPKEALHVLIDPSPGLLREVARVERRWVALCLHRTARKLATALAETASEAWHADYVCALRGAPSGPFYVHPEDVPHGGRAVADRCLLYYTPMQMCELMRTIDATLLVAVDLWPVALAAHVGDDWDDLGIAWHLDHDGGCPADCRGAGAGPTPGYTRPCTTRIYQVLPDTAHPGRLYRCGPRLWTRDCAVAELSWEVAQHCGHQARVRAVRCTLPIRHVRSLQPSARVRLPDLVHLAEVGRWRWFSLPRPVFQRMLSYCKTLSPDAYYSERVFKFKNALSHSITLAGNVLQEGWKGTCAEEDALCAYVAFRAWQSNARLAGIMKGAKRCAADSLSVAGWLDTIWDAIKRFFGSVPLAERMEEWEQDAAVAAFDRGPLEDGGRHLDTVQPPKSPPRPEIAATWIVHAASADRHCACAPRCDVPRERPSAPAGQPDDEALIPPWLFAERRALRCREWDFEALRARADTAAAPAPLAPRPARYPTVLYRHPAHHGPWLTLDEPGEADAALVLCDPLGQPLRGPERHFAAGAHMCAQARGLQAFVRVVPPPERPWADGGARAWAKFFRGCAWAQRLLGEPAVMHLPYTDGDVPQLIALALRTLAQQGAALALSVRDLPGGAAFDANAVTAAVRAGPGQLAATSPPPGDPPPPRRARRSQRHSDARGTPPPAPVRDPPPPAPSPPAPPRAGDPVPPTPAEPADRARDAELEVAYEPSGPPTSTKADPDSDIVESYARAAGPVHLRVRDIMDPPPGCKVVVNAANEGLLAGSGVCGAIFANATAALAADCRRLAPCPTGEAVATPGHGCGYTHIIHAVAPRRPRDPAALEEGEALLERAYRSIVALAAARRWAYVACPLLGAGVYGWSAAESLRAALAATRAEPVERVSLHICHPDRATLTHASVLVGAGLAARRVSPPPTEPLASCPAGGPGRPAQRSASPPATPLGDATAPEPRGCQGCELCRHTRVTNDRAYVNLWLERDRGATSWAMRIPEVVVYGPEHLATHFPLNHYSVLKPAEVRPPRGMCGSDMWRCRGWQGMPQVRCTPSNAHAALCRTGVPPRVSTRGGELDPNTCWLRAAANVAQVARACGAYTSAGCPKCAYGRALSEARTHEDFAALSQRWSASHADASPDGTGDPLDPLMETVGCACSRVWVGSEQEAPPDHLLVSLHRAPNGPWGVVLEVRARPEGGNPTGHFVCAVGGGPRRVSDRPHLWLAVPLSRGGGTCAATDEGLAQAYYDDLEVRRLGDDAMARAALASVQRPRKGPYNIRVWNMAAGAGKTTRILAAFTREDLYVCPTNALLHEIQAKLRARDIDIKNAATYERALTKPLAAYRRIYIDEAFTLGGEYCAFVASQTTAEVICVGDRDQCGPHYANNCRTPVPDRWPTERSRHTWRFPDCWAARLRAGLDYDIEGERTGIFACNLWDGRQVDLHLAFSRETVRRLHEAGIRAYTVREAQGMSVGTACIHVGRDGTDVALALTRDLAIVSLTRASDALYLHELEDGSLRAAGLSAFLDAGALAELKEVPAGIDRVVAVEQAPPPLPPADGIPEAQDVPPFCPRTLEELVFGRAGHPHYADLNRVTEGEREVRYMRISRHLLNKNHTEMPGTERVLSAVCAVRRYRAGEDGSTLRTAVARQHPRPFRQIPPPRVTAGVAQEWRMTYLRERIDLTDVYTQMGVAARELTDRYARRYPEIFAGMCTAQSLSVPAFLKATLKCVDAALGPRDTEDCHAAQGKAGLEIRAWAKEWVQVMSPHFRAIQKIIMRALRPQFLVAAGHTEPEVDAWWQAHYTTNAIEVDFTEFDMNQTLATRDVELEISAALLGLPCAEDYRALRAGSYCTLRELGSTETGCERTSGEPATLLHNTTVAMCMAMRMVPKGVRWAGIFQGDDMVIFLPEGARSAALKWTPAEVGLFGFHIPVKHVSTPTPSFCGHVGTAAGLFHDVMHQAIKVLCRRFDPDVLEEQQVALLDRLRGVYAALPDTVAANAAYYDYSAERVLAIVRELTAYARGRGLDHPATIGALEEIQTPYARANLHDAD.

Residues 36 to 49 (EVRDVVTAAQKRAI) form a required for efficient proteolysis and P150-P90 interaction region. The 191-residue stretch at 57 to 247 (VFTQMQVSDH…TRPCTTRIYQ (191 aa)) folds into the Alphavirus-like MT domain. A disordered region spans residues 715 to 782 (GQLAATSPPP…PTPAEPADRA (68 aa)). Pro residues-rich tracts occupy residues 721–730 (SPPPGDPPPP) and 745–776 (TPPPAPVRDPPPPAPSPPAPPRAGDPVPPTPA). 3 short sequence motifs (pxxPxR; class II SH3-binding) span residues 727–732 (PPPPRR), 747–752 (PPAPVR), and 761–766 (PPAPPR). The region spanning 806–985 (SDIVESYARA…LTHASVLVGA (180 aa)) is the Macro domain. Residues 991–1030 (RVSPPPTEPLASCPAGGPGRPAQRSASPPATPLGDATAPE) are disordered. A Peptidase C27 domain is found at 1000-1301 (LASCPAGGPG…WLAVPLSRGG (302 aa)). Residue cysteine 1152 is the For cysteine protease activity of the active site. The tract at residues 1152–1183 (CWLRAAANVAQVARACGAYTSAGCPKCAYGRA) is interaction with host CALM1. Zn(2+)-binding residues include cysteine 1175, cysteine 1178, cysteine 1227, and histidine 1273. The EF-hand-like stretch occupies residues 1193 to 1228 (FAALSQRWSASHADASPDGTGDPLDPLMETVGCACS). Residue histidine 1273 is the For cysteine protease activity of the active site. The region spanning 1320 to 1468 (EVRRLGDDAM…VPDRWPTERS (149 aa)) is the (+)RNA virus helicase ATP-binding domain. Residue 1352-1359 (MAAGAGKT) participates in a ribonucleoside 5'-triphosphate binding. Positions 1469-1609 (RHTWRFPDCW…ELKEVPAGID (141 aa)) constitute a (+)RNA virus helicase C-terminal domain. The segment at 1700 to 1900 (YRAGEDGSTL…VELEISAALL (201 aa)) is involved in P150-P90 interaction. Residues 1870-1981 (TNAIEVDFTE…FLPEGARSAA (112 aa)) enclose the RdRp catalytic domain. The Human RB1 binding motif lies at 1902-1906 (LPCAE).

As to quaternary structure, interacts with RNA-directed RNA polymerase p90. Interacts with host CALM1; this interaction is necessary for the protease activity and viral infectivity. Interacts with host C1QBP. Interacts with the capsid protein. Interacts with human RB1/retinoblastoma protein. Interacts with protease/methyltransferase p150. The cofactor is Zn(2+). Post-translationally, specific enzymatic cleavage by its own cysteine protease yield mature proteins p150 and p90.

It is found in the host membrane. The protein resides in the host cytoplasm. It localises to the host perinuclear region. It catalyses the reaction RNA(n) + a ribonucleoside 5'-triphosphate = RNA(n+1) + diphosphate. The catalysed reaction is a ribonucleoside 5'-triphosphate + H2O = a ribonucleoside 5'-diphosphate + phosphate + H(+). The enzyme catalyses ATP + H2O = ADP + phosphate + H(+). In terms of biological role, probable principal replicase for the negative-strand DNA, which replicates the 40S (+) genomic RNA into (-) antigenomic RNA. It cannot replicate the (-) into (+) until cleaved into p150 and p90 mature proteins. Protease that cleaves the precursor polyprotein into two mature products. Together with RNA-directed RNA polymerase p90, replicates the 40S genomic and antigenomic RNA by recognizing replications specific signals. The heterodimer P150/p90 is probably the principal replicase for positive-strand genomic RNA and the 24S subgenomic RNA, which codes for structural proteins. Responsible for the mRNA-capping of the viral mRNAs. This function is necessary since all viral RNAs are synthesized in the cytoplasm, and host capping enzymes are restricted to the nucleus. Forms fibers late in the infection that may be involved in cell-to-cell spread of the virus RNA in the absence of virus particle formation. Its function is as follows. Together with protease/methyltransferase p150, replicates the 40S genomic and antigenomic RNA by recognizing replications specific signals. The heterodimer P150/p90 is probably the principal replicase for positive-strand genomic RNA and the 24S subgenomic RNA, which codes for structural proteins. A helicase activity is probably also present. In Homo sapiens (Human), this protein is Non-structural polyprotein p200.